We begin with the raw amino-acid sequence, 121 residues long: Small ribosomal subunit protein uS13 (121 aa).

A disordered region spans residues histidine 91–lysine 121. A compositionally biased stretch (basic residues) spans alanine 106–lysine 121.

This sequence belongs to the universal ribosomal protein uS13 family. As to quaternary structure, part of the 30S ribosomal subunit. Forms a loose heterodimer with protein S19. Forms two bridges to the 50S subunit in the 70S ribosome.

Its function is as follows. Located at the top of the head of the 30S subunit, it contacts several helices of the 16S rRNA. In the 70S ribosome it contacts the 23S rRNA (bridge B1a) and protein L5 of the 50S subunit (bridge B1b), connecting the 2 subunits; these bridges are implicated in subunit movement. Contacts the tRNAs in the A and P-sites. This chain is Small ribosomal subunit protein uS13, found in Macrococcus caseolyticus (strain JCSC5402) (Macrococcoides caseolyticum).